We begin with the raw amino-acid sequence, 181 residues long: Large ribosomal subunit protein uL10 (181 aa).

This sequence belongs to the universal ribosomal protein uL10 family. Part of the ribosomal stalk of the 50S ribosomal subunit. The N-terminus interacts with L11 and the large rRNA to form the base of the stalk. The C-terminus forms an elongated spine to which L12 dimers bind in a sequential fashion forming a multimeric L10(L12)X complex.

In terms of biological role, forms part of the ribosomal stalk, playing a central role in the interaction of the ribosome with GTP-bound translation factors. The polypeptide is Large ribosomal subunit protein uL10 (Nostoc sp. (strain PCC 7120 / SAG 25.82 / UTEX 2576)).